The primary structure comprises 220 residues: Claudin-22 (220 aa).

At 1-10 (MGLVFRTATQ) the chain is on the cytoplasmic side. Residues 11-31 (AAALLLSLLGWVLSCLTNYLP) form a helical membrane-spanning segment. Residues 32-81 (HWKNLNLELNEMENWTMGLWKSCVIQEEVGRQCKDFDSFLALPAELQVSR) lie on the Extracellular side of the membrane. The helical transmembrane segment at 82 to 102 (VLMSLCNGLGLLGLLASGCGL) threads the bilayer. Residues 103 to 120 (DCLRLGETQEGLKKRLLT) lie on the Cytoplasmic side of the membrane. A helical membrane pass occupies residues 121–141 (LGGTLLWTSGVMVLVPVSWVA). Residues 142-164 (HKTVREFWDETMPEIVPRWEFGE) lie on the Extracellular side of the membrane. A helical transmembrane segment spans residues 165 to 185 (ALFLGWFAGFCLVLGGCVLHC). The Cytoplasmic portion of the chain corresponds to 186–220 (AACWSPAPAASSHYAVAGPRDHQQHLELKQANPEI).

It belongs to the claudin family.

The protein resides in the cell junction. The protein localises to the tight junction. Its subcellular location is the cell membrane. Plays a major role in tight junction-specific obliteration of the intercellular space, through calcium-independent cell-adhesion activity. This chain is Claudin-22 (Cldn22), found in Mus musculus (Mouse).